A 114-amino-acid chain; its full sequence is Procyclic form-specific polypeptide A-alpha (114 aa).

A signal peptide spans 1–27; sequence MAPRSLYLLAILLFSANLFAGVGFAAA. The segment at 33–95 is disordered; it reads SNVIVKGGKG…EPEPEPGAAT (63 aa). A compositionally biased stretch (acidic residues) spans 47–89; it reads DGPEEPEETGPEETGPEETGPEETGPEETGPEETGPEETEPEP. A run of 7 repeats spans residues 48 to 52, 56 to 60, 61 to 65, 66 to 70, 71 to 75, 76 to 80, and 81 to 85. The segment at 48–85 is 7 X 5 AA tandem repeats of G-P-E-E-[PT]; it reads GPEEPEETGPEETGPEETGPEETGPEETGPEETGPEET. A lipid anchor (GPI-anchor amidated glycine) is attached at G92. The propeptide occupies 93–114; sequence AATLKSVALPFAVAAAALVAAF.

The protein localises to the cell membrane. Its function is as follows. Major surface antigen of procyclic forms. In Trypanosoma brucei brucei, this protein is Procyclic form-specific polypeptide A-alpha (PARPA-ALPHA).